The sequence spans 458 residues: DNA repair protein RadA (458 aa).

The segment at Cys11 to Cys28 adopts a C4-type zinc-finger fold. Residue Gly100–Ser107 participates in ATP binding. The RadA KNRFG motif motif lies at Lys256 to Gly260. Positions Asp355 to Leu458 are lon-protease-like.

It belongs to the RecA family. RadA subfamily.

In terms of biological role, DNA-dependent ATPase involved in processing of recombination intermediates, plays a role in repairing DNA breaks. Stimulates the branch migration of RecA-mediated strand transfer reactions, allowing the 3' invading strand to extend heteroduplex DNA faster. Binds ssDNA in the presence of ADP but not other nucleotides, has ATPase activity that is stimulated by ssDNA and various branched DNA structures, but inhibited by SSB. Does not have RecA's homology-searching function. The protein is DNA repair protein RadA of Haemophilus influenzae (strain ATCC 51907 / DSM 11121 / KW20 / Rd).